We begin with the raw amino-acid sequence, 304 residues long: Sulfate adenylyltransferase subunit 2 2 (304 aa).

Belongs to the PAPS reductase family. CysD subfamily. In terms of assembly, heterodimer composed of CysD, the smaller subunit, and CysN.

It carries out the reaction sulfate + ATP + H(+) = adenosine 5'-phosphosulfate + diphosphate. It functions in the pathway sulfur metabolism; hydrogen sulfide biosynthesis; sulfite from sulfate: step 1/3. With CysN forms the ATP sulfurylase (ATPS) that catalyzes the adenylation of sulfate producing adenosine 5'-phosphosulfate (APS) and diphosphate, the first enzymatic step in sulfur assimilation pathway. APS synthesis involves the formation of a high-energy phosphoric-sulfuric acid anhydride bond driven by GTP hydrolysis by CysN coupled to ATP hydrolysis by CysD. In Marinobacter nauticus (strain ATCC 700491 / DSM 11845 / VT8) (Marinobacter aquaeolei), this protein is Sulfate adenylyltransferase subunit 2 2.